The following is a 114-amino-acid chain: T cell receptor beta variable 6-9 (114 aa).

The signal sequence occupies residues 1–21 (MSIGLLCCVAFSLLWAGPVNA). Positions 22–114 (GVTQTPKFHI…TSVYFCASSY (93 aa)) constitute an Ig-like domain. A disulfide bond links C42 and C110. N-linked (GlcNAc...) asparagine glycosylation occurs at N84.

As to quaternary structure, alpha-beta TR is a heterodimer composed of an alpha and beta chain; disulfide-linked. The alpha-beta TR is associated with the transmembrane signaling CD3 coreceptor proteins to form the TR-CD3 (TcR or TCR). The assembly of alpha-beta TR heterodimers with CD3 occurs in the endoplasmic reticulum where a single alpha-beta TR heterodimer associates with one CD3D-CD3E heterodimer, one CD3G-CD3E heterodimer and one CD247 homodimer forming a stable octameric structure. CD3D-CD3E and CD3G-CD3E heterodimers preferentially associate with TR alpha and TR beta chains, respectively. The association of the CD247 homodimer is the last step of TcR assembly in the endoplasmic reticulum and is required for transport to the cell surface.

The protein localises to the cell membrane. Functionally, v region of the variable domain of T cell receptor (TR) beta chain that participates in the antigen recognition. Alpha-beta T cell receptors are antigen specific receptors which are essential to the immune response and are present on the cell surface of T lymphocytes. Recognize peptide-major histocompatibility (MH) (pMH) complexes that are displayed by antigen presenting cells (APC), a prerequisite for efficient T cell adaptive immunity against pathogens. Binding of alpha-beta TR to pMH complex initiates TR-CD3 clustering on the cell surface and intracellular activation of LCK that phosphorylates the ITAM motifs of CD3G, CD3D, CD3E and CD247 enabling the recruitment of ZAP70. In turn ZAP70 phosphorylates LAT, which recruits numerous signaling molecules to form the LAT signalosome. The LAT signalosome propagates signal branching to three major signaling pathways, the calcium, the mitogen-activated protein kinase (MAPK) kinase and the nuclear factor NF-kappa-B (NF-kB) pathways, leading to the mobilization of transcription factors that are critical for gene expression and essential for T cell growth and differentiation. The T cell repertoire is generated in the thymus, by V-(D)-J rearrangement. This repertoire is then shaped by intrathymic selection events to generate a peripheral T cell pool of self-MH restricted, non-autoaggressive T cells. Post-thymic interaction of alpha-beta TR with the pMH complexes shapes TR structural and functional avidity. This Homo sapiens (Human) protein is T cell receptor beta variable 6-9.